We begin with the raw amino-acid sequence, 224 residues long: UPF0758 protein Neut_0782 (224 aa).

Positions 102–224 (IMDSPQSVRS…TVSFAERGLI (123 aa)) constitute an MPN domain. Zn(2+) is bound by residues histidine 173, histidine 175, and aspartate 186. Residues 173-186 (HNHPSGVAEPSRAD) carry the JAMM motif motif.

It belongs to the UPF0758 family.

In Nitrosomonas eutropha (strain DSM 101675 / C91 / Nm57), this protein is UPF0758 protein Neut_0782.